The primary structure comprises 108 residues: Ig kappa chain V region 120 (108 aa).

The framework-1 stretch occupies residues 1 to 23 (AFELTQTPSSVEAAVGGTVTIKC). A complementarity-determining-1 region spans residues 24-34 (QSSQSIGTYLA). Residues 35–49 (WYZZKPGQPPKLLIY) form a framework-2 region. Residues 50–56 (RASTLAS) are complementarity-determining-2. The tract at residues 57 to 88 (GVSSRFKGSGSGTEFTLTISGVECADAATYYC) is framework-3. The complementarity-determining-3 stretch occupies residues 89–97 (QGTYYZSAS). The interval 98 to 107 (FGGGTEVVVK) is framework-4.

The protein is Ig kappa chain V region 120 of Oryctolagus cuniculus (Rabbit).